Consider the following 121-residue polypeptide: Small ribosomal subunit protein uS13 (121 aa).

The segment at 95–121 is disordered; that stretch reads LPMRGQRTRTNARTRKGPRKAAASLKK.

The protein belongs to the universal ribosomal protein uS13 family. Part of the 30S ribosomal subunit. Forms a loose heterodimer with protein S19. Forms two bridges to the 50S subunit in the 70S ribosome.

In terms of biological role, located at the top of the head of the 30S subunit, it contacts several helices of the 16S rRNA. In the 70S ribosome it contacts the 23S rRNA (bridge B1a) and protein L5 of the 50S subunit (bridge B1b), connecting the 2 subunits; these bridges are implicated in subunit movement. Contacts the tRNAs in the A and P-sites. The protein is Small ribosomal subunit protein uS13 of Polaromonas naphthalenivorans (strain CJ2).